A 147-amino-acid polypeptide reads, in one-letter code: Hemoglobin subunit beta (147 aa).

The residue at position 2 (V2) is an N-acetylvaline. Positions 3–147 (HLTGEEKSAV…VANALAHKYH (145 aa)) constitute a Globin domain. A Phosphothreonine modification is found at T13. S45 is modified (phosphoserine). K60 bears the N6-acetyllysine mark. Position 64 (H64) interacts with heme b. K83 carries the N6-acetyllysine modification. H93 serves as a coordination point for heme b. Residue C94 is modified to S-nitrosocysteine. At K145 the chain carries N6-acetyllysine.

The protein belongs to the globin family. Heterotetramer of two alpha chains and two beta chains. Red blood cells.

Functionally, involved in oxygen transport from the lung to the various peripheral tissues. The sequence is that of Hemoglobin subunit beta (HBB) from Callithrix jacchus (White-tufted-ear marmoset).